Here is a 100-residue protein sequence, read N- to C-terminus: Integration host factor subunit alpha (100 aa).

Residues 50-70 (GNFQLRDKPQRPGRNPKTGEE) form a disordered region.

It belongs to the bacterial histone-like protein family. As to quaternary structure, heterodimer of an alpha and a beta chain.

Functionally, this protein is one of the two subunits of integration host factor, a specific DNA-binding protein that functions in genetic recombination as well as in transcriptional and translational control. In Chromobacterium violaceum (strain ATCC 12472 / DSM 30191 / JCM 1249 / CCUG 213 / NBRC 12614 / NCIMB 9131 / NCTC 9757 / MK), this protein is Integration host factor subunit alpha.